The chain runs to 906 residues: Cadherin-2 (906 aa).

The N-terminal stretch at Met1–Ala25 is a signal peptide. Positions Ser26–Arg159 are excised as a propeptide. Phosphoserine; by FAM20C occurs at positions 96 and 135. Cadherin domains are found at residues Asp160 to Phe267, Leu268 to Phe382, Thr383 to Phe497, Ala498 to Pro603, and Gln604 to Arg714. Topologically, residues Asp160–Ala724 are extracellular. Ca(2+) is bound at residue Glu170. Asn190 carries an N-linked (GlcNAc...) asparagine glycan. Ca(2+) contacts are provided by Asp226, Glu228, Asp259, Met260, Asn261, Asp262, and Asn263. Asn273 carries an N-linked (GlcNAc...) asparagine glycan. The Ca(2+) site is built by Asp293, Asp295, and Asn301. Asn325 is a glycosylation site (N-linked (GlcNAc...) asparagine). Asp353 contributes to the Ca(2+) binding site. Asn402, Asn572, Asn651, and Asn692 each carry an N-linked (GlcNAc...) asparagine glycan. The chain crosses the membrane as a helical span at residues Ile725–Trp745. Over Met746–Asp906 the chain is Cytoplasmic. Residues Ser863–Gly880 show a composition bias toward low complexity. Residues Ser863–Tyr884 form a disordered region.

Homodimer (via extracellular region). Can also form heterodimers with other cadherins (via extracellular region). Dimerization occurs in trans, i.e. with a cadherin chain from another cell. Interacts with CDCP1. Interacts with PCDH8; this complex may also include TAOK2. The interaction with PCDH8 may lead to internalization through TAOK2/p38 MAPK pathway. Identified in a complex containing FGFR4, NCAM1, CDH2, PLCG1, FRS2, SRC, SHC1, GAP43 and CTTN. May interact with OBSCN (via protein kinase domain 2). Interacts with FBXO45. In terms of processing, cleaved by MMP24. Ectodomain cleavage leads to the generation of a soluble 90 kDa N-terminal soluble fragment and a 45 kDa membrane-bound C-terminal fragment 1 (CTF1), which is further cleaved by gamma-secretase into a 35 kDa. Cleavage in neural stem cells by MMP24 affects CDH2-mediated anchorage of neural stem cells to ependymocytes in the adult subependymal zone, leading to modulate neural stem cell quiescence. Post-translationally, may be phosphorylated by OBSCN.

The protein resides in the cell membrane. It localises to the sarcolemma. It is found in the cell junction. Its subcellular location is the cell surface. The protein localises to the desmosome. The protein resides in the adherens junction. Functionally, calcium-dependent cell adhesion protein; preferentially mediates homotypic cell-cell adhesion by dimerization with a CDH2 chain from another cell. Cadherins may thus contribute to the sorting of heterogeneous cell types. Acts as a regulator of neural stem cells quiescence by mediating anchorage of neural stem cells to ependymocytes in the adult subependymal zone: upon cleavage by MMP24, CDH2-mediated anchorage is affected, leading to modulate neural stem cell quiescence. Plays a role in cell-to-cell junction formation between pancreatic beta cells and neural crest stem (NCS) cells, promoting the formation of processes by NCS cells. Required for proper neurite branching. Required for pre- and postsynaptic organization. CDH2 may be involved in neuronal recognition mechanism. In hippocampal neurons, may regulate dendritic spine density. The protein is Cadherin-2 (CDH2) of Homo sapiens (Human).